The chain runs to 422 residues: Beta-1,3-galactosyltransferase 2 (422 aa).

At 1–20 the chain is on the cytoplasmic side; that stretch reads MLQWRRRHCCFAKMTWSPKR. A helical; Signal-anchor for type II membrane protein membrane pass occupies residues 21–43; sequence SLLRTPLTGVLSLVFLFAMFLFF. Residues 44–422 lie on the Lumenal side of the membrane; the sequence is NHHDWLPGRP…AGRYRHRKLH (379 aa). N-linked (GlcNAc...) asparagine glycans are attached at residues Asn-75, Asn-98, Asn-119, Asn-176, and Asn-226. The segment at 91–110 is disordered; sequence LRPHTASNSSNTELSPQGVT. Over residues 95 to 110 the composition is skewed to polar residues; sequence TASNSSNTELSPQGVT.

It belongs to the glycosyltransferase 31 family. It depends on Mn(2+) as a cofactor. Detected in brain and heart.

It localises to the golgi apparatus membrane. The enzyme catalyses an N-acetyl-beta-D-glucosaminyl derivative + UDP-alpha-D-galactose = a beta-D-galactosyl-(1-&gt;3)-N-acetyl-beta-D-glucosaminyl derivative + UDP + H(+). It carries out the reaction a beta-D-GlcNAc-(1-&gt;3)-beta-D-Gal-(1-&gt;4)-beta-D-Glc-(1&lt;-&gt;1)-Cer(d18:1(4E)) + UDP-alpha-D-galactose = a beta-D-Gal-(1-&gt;3)-beta-D-GlcNAc-(1-&gt;3)-beta-D-Gal-(1-&gt;4)-beta-D-Glc-(1&lt;-&gt;1')-Cer(d18:1(4E)) + UDP + H(+). The catalysed reaction is a neolactoside IV(3)-beta-GlcNAc-nLc4Cer(d18:1(4E)) + UDP-alpha-D-galactose = a neolactoside IV(3)-beta-[Gal-beta-(1-&gt;3)-GlcNAc]-nLc4Cer(d18:1(4E)) + UDP + H(+). Its pathway is protein modification; protein glycosylation. Beta-1,3-galactosyltransferase that transfers galactose from UDP-galactose to substrates with a terminal beta-N-acetylglucosamine (beta-GlcNAc) residue. Can also utilize substrates with a terminal galactose residue, albeit with lower efficiency. Involved in the biosynthesis of the carbohydrate moieties of glycolipids and glycoproteins. The sequence is that of Beta-1,3-galactosyltransferase 2 from Mus musculus (Mouse).